A 431-amino-acid chain; its full sequence is MSTIIDVYAREVLDSRGNPTVEVEVYTESGAFGRAIVPSGASTGEHEAVELRDGDKSRYLGKGVMNAVNNVNEAIAPEIVGFDVTDQAGIDRAMIELDGTPNKGKLGANAILGVSMAVAHAAADFVGLPLYRYLGGFNAKQLPTPMMNIINGGSHADNNVDFQEFMILPVGAPTFKESIRMGAEVFHALKAVLHDKGLNTAVGDEGGFAPNLGSNREALEVIIEAIEKAGYKAGENVFLGMDVASSEFYNKETGKYDLAGEGRTGLTSAEMVDFYEELCKDFPIISIEDGLDENDWDGHKLLTERIGDKVQLVGDDLFVTNTQKLAEGIEKGISNSILIKVNQIGTLTETFEAIEMAKRAGYTAVVSHRSGETEDATIADIAVATNAGQIKTGSMSRTDRIAKYNQLLRIEDELGEIAVYDGIKSFYNIKR.

A (2R)-2-phosphoglycerate-binding site is contributed by Q163. The active-site Proton donor is E205. Mg(2+) is bound by residues D242, E288, and D315. (2R)-2-phosphoglycerate contacts are provided by K340, R369, S370, and K391. The Proton acceptor role is filled by K340.

The protein belongs to the enolase family. Requires Mg(2+) as cofactor.

The protein localises to the cytoplasm. The protein resides in the secreted. It localises to the cell surface. It carries out the reaction (2R)-2-phosphoglycerate = phosphoenolpyruvate + H2O. It participates in carbohydrate degradation; glycolysis; pyruvate from D-glyceraldehyde 3-phosphate: step 4/5. In terms of biological role, catalyzes the reversible conversion of 2-phosphoglycerate (2-PG) into phosphoenolpyruvate (PEP). It is essential for the degradation of carbohydrates via glycolysis. This Bacillus anthracis (strain A0248) protein is Enolase.